Consider the following 156-residue polypeptide: ATP synthase subunit b (156 aa).

Residues 5–27 (ITLIGQMITFAIFVGFTMKFVWP) form a helical membrane-spanning segment.

This sequence belongs to the ATPase B chain family. As to quaternary structure, F-type ATPases have 2 components, F(1) - the catalytic core - and F(0) - the membrane proton channel. F(1) has five subunits: alpha(3), beta(3), gamma(1), delta(1), epsilon(1). F(0) has three main subunits: a(1), b(2) and c(10-14). The alpha and beta chains form an alternating ring which encloses part of the gamma chain. F(1) is attached to F(0) by a central stalk formed by the gamma and epsilon chains, while a peripheral stalk is formed by the delta and b chains.

The protein resides in the cell inner membrane. Functionally, f(1)F(0) ATP synthase produces ATP from ADP in the presence of a proton or sodium gradient. F-type ATPases consist of two structural domains, F(1) containing the extramembraneous catalytic core and F(0) containing the membrane proton channel, linked together by a central stalk and a peripheral stalk. During catalysis, ATP synthesis in the catalytic domain of F(1) is coupled via a rotary mechanism of the central stalk subunits to proton translocation. Its function is as follows. Component of the F(0) channel, it forms part of the peripheral stalk, linking F(1) to F(0). This is ATP synthase subunit b from Francisella philomiragia subsp. philomiragia (strain ATCC 25017 / CCUG 19701 / FSC 153 / O#319-036).